A 103-amino-acid chain; its full sequence is Large ribosomal subunit protein P2 (103 aa).

Positions 64–103 are disordered; sequence LAISSSQKSEPAQPADTAESTQATENKEEEDEDFDIFAAF. A compositionally biased stretch (acidic residues) spans 90 to 103; it reads KEEEDEDFDIFAAF.

It belongs to the eukaryotic ribosomal protein P1/P2 family. Component of the large ribosomal subunit.

Its subcellular location is the cytoplasm. Functionally, plays an important role in the elongation step of protein synthesis. The chain is Large ribosomal subunit protein P2 (RPP2A) from Encephalitozoon cuniculi (strain GB-M1) (Microsporidian parasite).